A 219-amino-acid polypeptide reads, in one-letter code: Deoxyribose-phosphate aldolase (219 aa).

Asp93 (proton donor/acceptor) is an active-site residue. Lys154 serves as the catalytic Schiff-base intermediate with acetaldehyde. The active-site Proton donor/acceptor is Lys179.

It belongs to the DeoC/FbaB aldolase family. DeoC type 1 subfamily.

Its subcellular location is the cytoplasm. It catalyses the reaction 2-deoxy-D-ribose 5-phosphate = D-glyceraldehyde 3-phosphate + acetaldehyde. Its pathway is carbohydrate degradation; 2-deoxy-D-ribose 1-phosphate degradation; D-glyceraldehyde 3-phosphate and acetaldehyde from 2-deoxy-alpha-D-ribose 1-phosphate: step 2/2. Catalyzes a reversible aldol reaction between acetaldehyde and D-glyceraldehyde 3-phosphate to generate 2-deoxy-D-ribose 5-phosphate. In Haloquadratum walsbyi (strain DSM 16790 / HBSQ001), this protein is Deoxyribose-phosphate aldolase.